A 409-amino-acid chain; its full sequence is Aspartate aminotransferase, cytoplasmic (409 aa).

At Ser2 the chain carries N-acetylserine. L-aspartate-binding residues include Gly38, Trp138, and Asn191. Lys255 carries the post-translational modification N6-(pyridoxal phosphate)lysine. An L-aspartate-binding site is contributed by Arg383. Phosphoserine is present on Ser385.

This sequence belongs to the class-I pyridoxal-phosphate-dependent aminotransferase family. In terms of assembly, homodimer. Pyridoxal 5'-phosphate serves as cofactor.

It localises to the cytoplasm. It carries out the reaction L-aspartate + 2-oxoglutarate = oxaloacetate + L-glutamate. Its function is as follows. Plays a key role in amino acid metabolism. This chain is Aspartate aminotransferase, cytoplasmic, found in Schizosaccharomyces pombe (strain 972 / ATCC 24843) (Fission yeast).